Consider the following 466-residue polypeptide: UDP-N-acetylmuramate--L-alanine ligase (466 aa).

Position 114-120 (114-120 (GTHGKTT)) interacts with ATP.

The protein belongs to the MurCDEF family.

Its subcellular location is the cytoplasm. It catalyses the reaction UDP-N-acetyl-alpha-D-muramate + L-alanine + ATP = UDP-N-acetyl-alpha-D-muramoyl-L-alanine + ADP + phosphate + H(+). Its pathway is cell wall biogenesis; peptidoglycan biosynthesis. Cell wall formation. This is UDP-N-acetylmuramate--L-alanine ligase from Chlorobium phaeobacteroides (strain DSM 266 / SMG 266 / 2430).